The following is a 476-amino-acid chain: Protein DETOXIFICATION 1 (476 aa).

Transmembrane regions (helical) follow at residues 35 to 55, 66 to 86, 117 to 137, 146 to 166, 184 to 204, 208 to 228, 260 to 280, 289 to 309, 331 to 351, 370 to 390, 402 to 422, and 433 to 453; these read AAPM…SVMV, GVAL…CGLV, IPIC…LISL, IAGS…IVIP, AVTT…LFGL, GPAM…SCYV, AAMI…SGLL, VLSI…GVAA, VLAG…LLFT, VADL…TAVL, IGAW…GIYL, and LWCG…IVTA.

Belongs to the multi antimicrobial extrusion (MATE) (TC 2.A.66.1) family. As to expression, ubiquitous. Highest expression in flowers and stems.

The protein resides in the cell membrane. Efflux carrier for plant-derived alkaloids, antibiotics, heavy metal and other toxic compounds. Involved in cadmium detoxification. Requires probably a proton-motive force for the efflux. This chain is Protein DETOXIFICATION 1, found in Arabidopsis thaliana (Mouse-ear cress).